The sequence spans 334 residues: Dihydroorotate dehydrogenase (quinone) (334 aa).

FMN is bound by residues 59–63 (AGLDK) and T83. K63 contacts substrate. Position 108-112 (108-112 (NRMGF)) interacts with substrate. FMN contacts are provided by N136 and N169. Residue N169 coordinates substrate. S172 serves as the catalytic Nucleophile. Residue N174 participates in substrate binding. FMN-binding residues include K214 and T242. Residue 243 to 244 (NT) coordinates substrate. FMN-binding positions include G265, G294, and 315–316 (YS).

It belongs to the dihydroorotate dehydrogenase family. Type 2 subfamily. Monomer. FMN serves as cofactor.

The protein resides in the cell membrane. It catalyses the reaction (S)-dihydroorotate + a quinone = orotate + a quinol. It functions in the pathway pyrimidine metabolism; UMP biosynthesis via de novo pathway; orotate from (S)-dihydroorotate (quinone route): step 1/1. In terms of biological role, catalyzes the conversion of dihydroorotate to orotate with quinone as electron acceptor. This Acinetobacter baylyi (strain ATCC 33305 / BD413 / ADP1) protein is Dihydroorotate dehydrogenase (quinone).